The primary structure comprises 415 residues: 6-phospho-beta-glucosidase BglT (415 aa).

Residue 1 to 64 (MRIAVIGGGS…DRFKVLISDT (64 aa)) participates in NAD(+) binding. Positions 87 and 140 each coordinate substrate. Mn(2+) is bound at residue cysteine 162. Position 163 (asparagine 163) interacts with substrate. Histidine 192 serves as a coordination point for Mn(2+). The Proton acceptor role is filled by tyrosine 241. Arginine 261 contacts substrate.

This sequence belongs to the glycosyl hydrolase 4 family. As to quaternary structure, homodimer or homotetramer. Exists in a homodimer/homotetramer equilibrium state in solution. Requires NAD(+) as cofactor. The cofactor is Mn(2+).

The catalysed reaction is 6-phospho-beta-D-glucosyl-(1-&gt;4)-D-glucose + H2O = D-glucose 6-phosphate + D-glucose. Functionally, hydrolyzes cellobiose 6'-phosphate into glucose 6-phosphate (Glc6P) and glucose. This chain is 6-phospho-beta-glucosidase BglT (bglT), found in Thermotoga maritima (strain ATCC 43589 / DSM 3109 / JCM 10099 / NBRC 100826 / MSB8).